The primary structure comprises 360 residues: Phosphoserine aminotransferase (360 aa).

Arginine 42 is an L-glutamate binding site. Pyridoxal 5'-phosphate is bound by residues 76-77, tryptophan 102, threonine 153, aspartate 172, and glutamine 195; that span reads AR. An N6-(pyridoxal phosphate)lysine modification is found at lysine 196. 237 to 238 lines the pyridoxal 5'-phosphate pocket; the sequence is NT.

The protein belongs to the class-V pyridoxal-phosphate-dependent aminotransferase family. SerC subfamily. As to quaternary structure, homodimer. It depends on pyridoxal 5'-phosphate as a cofactor.

The protein resides in the cytoplasm. It carries out the reaction O-phospho-L-serine + 2-oxoglutarate = 3-phosphooxypyruvate + L-glutamate. The enzyme catalyses 4-(phosphooxy)-L-threonine + 2-oxoglutarate = (R)-3-hydroxy-2-oxo-4-phosphooxybutanoate + L-glutamate. Its pathway is amino-acid biosynthesis; L-serine biosynthesis; L-serine from 3-phospho-D-glycerate: step 2/3. The protein operates within cofactor biosynthesis; pyridoxine 5'-phosphate biosynthesis; pyridoxine 5'-phosphate from D-erythrose 4-phosphate: step 3/5. Functionally, catalyzes the reversible conversion of 3-phosphohydroxypyruvate to phosphoserine and of 3-hydroxy-2-oxo-4-phosphonooxybutanoate to phosphohydroxythreonine. This Aliivibrio fischeri (strain ATCC 700601 / ES114) (Vibrio fischeri) protein is Phosphoserine aminotransferase.